We begin with the raw amino-acid sequence, 285 residues long: Acetylglutamate kinase (285 aa).

Substrate contacts are provided by residues 64–65, Arg-86, and Asn-181; that span reads GG.

Belongs to the acetylglutamate kinase family. ArgB subfamily.

It is found in the cytoplasm. The enzyme catalyses N-acetyl-L-glutamate + ATP = N-acetyl-L-glutamyl 5-phosphate + ADP. The protein operates within amino-acid biosynthesis; L-arginine biosynthesis; N(2)-acetyl-L-ornithine from L-glutamate: step 2/4. In terms of biological role, catalyzes the ATP-dependent phosphorylation of N-acetyl-L-glutamate. This chain is Acetylglutamate kinase, found in Clostridium beijerinckii (strain ATCC 51743 / NCIMB 8052) (Clostridium acetobutylicum).